The following is a 42-amino-acid chain: Crotamine-IV-3 (42 aa).

3 disulfide bridges follow: Cys-4/Cys-37, Cys-11/Cys-31, and Cys-19/Cys-38.

It belongs to the crotamine-myotoxin family. Monomer. As to expression, expressed by the venom gland.

It localises to the secreted. Functionally, cationic peptide that possesses multiple functions. It acts as a cell-penetrating peptide (CPP), and as a potent voltage-gated potassium channel (Kv) inhibitor. It exhibits antimicrobial activities, and hind limb paralysis. It also induces potent blockade of neuromuscular transmission in young chicken biventer cervicis preparation and potent myotoxic effect. In mice, it induces myonecrosis, upon intramuscular or subcutaneous injections. The protein is Crotamine-IV-3 of Crotalus durissus cumanensis (South American rattlesnake).